Consider the following 322-residue polypeptide: Phosphatidylserine decarboxylase proenzyme (322 aa).

Active-site charge relay system; for autoendoproteolytic cleavage activity residues include Asp90, His147, and Ser254. Ser254 (schiff-base intermediate with substrate; via pyruvic acid; for decarboxylase activity) is an active-site residue. Ser254 is subject to Pyruvic acid (Ser); by autocatalysis. The disordered stretch occupies residues 296 to 322 (EPAPLPAEEIKAEHDASPLVDNKKDDT). Positions 303 to 322 (EEIKAEHDASPLVDNKKDDT) are enriched in basic and acidic residues.

This sequence belongs to the phosphatidylserine decarboxylase family. PSD-B subfamily. Prokaryotic type I sub-subfamily. As to quaternary structure, heterodimer of a large membrane-associated beta subunit and a small pyruvoyl-containing alpha subunit. Requires pyruvate as cofactor. Post-translationally, is synthesized initially as an inactive proenzyme. Formation of the active enzyme involves a self-maturation process in which the active site pyruvoyl group is generated from an internal serine residue via an autocatalytic post-translational modification. Two non-identical subunits are generated from the proenzyme in this reaction, and the pyruvate is formed at the N-terminus of the alpha chain, which is derived from the carboxyl end of the proenzyme. The autoendoproteolytic cleavage occurs by a canonical serine protease mechanism, in which the side chain hydroxyl group of the serine supplies its oxygen atom to form the C-terminus of the beta chain, while the remainder of the serine residue undergoes an oxidative deamination to produce ammonia and the pyruvoyl prosthetic group on the alpha chain. During this reaction, the Ser that is part of the protease active site of the proenzyme becomes the pyruvoyl prosthetic group, which constitutes an essential element of the active site of the mature decarboxylase.

It is found in the cell membrane. It carries out the reaction a 1,2-diacyl-sn-glycero-3-phospho-L-serine + H(+) = a 1,2-diacyl-sn-glycero-3-phosphoethanolamine + CO2. It participates in phospholipid metabolism; phosphatidylethanolamine biosynthesis; phosphatidylethanolamine from CDP-diacylglycerol: step 2/2. Its function is as follows. Catalyzes the formation of phosphatidylethanolamine (PtdEtn) from phosphatidylserine (PtdSer). In Salmonella dublin (strain CT_02021853), this protein is Phosphatidylserine decarboxylase proenzyme.